The chain runs to 986 residues: Bifunctional glutamine synthetase adenylyltransferase/adenylyl-removing enzyme (986 aa).

Residues methionine 1 to alanine 471 form an adenylyl removase region. The adenylyl transferase stretch occupies residues threonine 475–alanine 986.

This sequence belongs to the GlnE family. Mg(2+) serves as cofactor.

The enzyme catalyses [glutamine synthetase]-O(4)-(5'-adenylyl)-L-tyrosine + phosphate = [glutamine synthetase]-L-tyrosine + ADP. The catalysed reaction is [glutamine synthetase]-L-tyrosine + ATP = [glutamine synthetase]-O(4)-(5'-adenylyl)-L-tyrosine + diphosphate. Involved in the regulation of glutamine synthetase GlnA, a key enzyme in the process to assimilate ammonia. When cellular nitrogen levels are high, the C-terminal adenylyl transferase (AT) inactivates GlnA by covalent transfer of an adenylyl group from ATP to specific tyrosine residue of GlnA, thus reducing its activity. Conversely, when nitrogen levels are low, the N-terminal adenylyl removase (AR) activates GlnA by removing the adenylyl group by phosphorolysis, increasing its activity. The regulatory region of GlnE binds the signal transduction protein PII (GlnB) which indicates the nitrogen status of the cell. The chain is Bifunctional glutamine synthetase adenylyltransferase/adenylyl-removing enzyme from Rhizobium meliloti (strain 1021) (Ensifer meliloti).